The following is a 158-amino-acid chain: Large ribosomal subunit protein mL50 (158 aa).

This sequence belongs to the mitochondrion-specific ribosomal protein mL50 family. As to quaternary structure, component of the mitochondrial large ribosomal subunit (mt-LSU). Mature mammalian 55S mitochondrial ribosomes consist of a small (28S) and a large (39S) subunit. The 28S small subunit contains a 12S ribosomal RNA (12S mt-rRNA) and 30 different proteins. The 39S large subunit contains a 16S rRNA (16S mt-rRNA), a copy of mitochondrial valine transfer RNA (mt-tRNA(Val)), which plays an integral structural role, and 52 different proteins.

It localises to the mitochondrion. The sequence is that of Large ribosomal subunit protein mL50 (MRPL50) from Homo sapiens (Human).